The following is a 109-amino-acid chain: Mitochondrial import inner membrane translocase subunit TIM12 (109 aa).

S2 bears the N-acetylserine mark. Positions 40 to 66 (CLEKCIPHEGFGEPDLTKGEQCCIDRC) match the Twin CX3C motif motif. 2 disulfides stabilise this stretch: C40-C66 and C44-C62.

This sequence belongs to the small Tim family. As to quaternary structure, component of the TIM22 complex, whose core is composed of TIM18, TIM22 and TIM54, associated with the peripheral proteins MRS5/TIM12 and the 70 kDa heterohexamer composed of TIM9 and TIM10 (or TIM8 and TIM13). Interacts directly with both the TIM22 protein and the TIM9-TIM10 heterohexamer. Interacts with multi-pass transmembrane proteins in transit.

It localises to the mitochondrion inner membrane. Its subcellular location is the mitochondrion intermembrane space. Its function is as follows. Essential component of the TIM22 complex, a complex that mediates the import and insertion of multi-pass transmembrane proteins into the mitochondrial inner membrane. The TIM22 complex forms a twin-pore translocase that uses the membrane potential as external driving force. In the TIM22 complex, it acts as a docking point for the soluble TIM9-TIM10 heterohexamer that guides the target proteins in transit through the aqueous mitochondrial intermembrane space. The polypeptide is Mitochondrial import inner membrane translocase subunit TIM12 (TIM12) (Saccharomyces cerevisiae (strain ATCC 204508 / S288c) (Baker's yeast)).